The primary structure comprises 218 residues: uncharacterized protein (218 aa).

Positions 7-123 constitute a Response regulatory domain; the sequence is RVALADDQPL…ELIDAIRAAA (117 aa). The residue at position 58 (Asp58) is a 4-aspartylphosphate. Residues 150 to 215 form the HTH luxR-type domain; the sequence is AEELAEPFTK…QAVVFAIRNG (66 aa). Positions 174-193 form a DNA-binding region, H-T-H motif; that stretch reads NEDIAEKLFVSESTVKTHVH.

In terms of processing, phosphorylated by YxjM.

Its subcellular location is the cytoplasm. Its function is as follows. Probable member of the two-component regulatory system YxjM/YxjL. This is an uncharacterized protein from Bacillus subtilis (strain 168).